A 540-amino-acid chain; its full sequence is Chaperonin GroEL 2 (540 aa).

ATP is bound by residues 29 to 32, K50, 86 to 90, G414, and D496; these read TMGP and DGTTT.

The protein belongs to the chaperonin (HSP60) family. As to quaternary structure, forms a cylinder of 14 subunits composed of two heptameric rings stacked back-to-back. Interacts with the co-chaperonin GroES.

It is found in the cytoplasm. The enzyme catalyses ATP + H2O + a folded polypeptide = ADP + phosphate + an unfolded polypeptide.. Together with its co-chaperonin GroES, plays an essential role in assisting protein folding. The GroEL-GroES system forms a nano-cage that allows encapsulation of the non-native substrate proteins and provides a physical environment optimized to promote and accelerate protein folding. The protein is Chaperonin GroEL 2 of Rhodopirellula baltica (strain DSM 10527 / NCIMB 13988 / SH1).